The following is a 452-amino-acid chain: Pup--protein ligase (452 aa).

Glu-9 lines the Mg(2+) pocket. Arg-53 is an ATP binding site. Position 55 (Tyr-55) interacts with Mg(2+). Asp-57 acts as the Proton acceptor in catalysis. Glu-63 contributes to the Mg(2+) binding site. Residues Thr-66 and Trp-419 each contribute to the ATP site.

This sequence belongs to the Pup ligase/Pup deamidase family. Pup-conjugating enzyme subfamily.

The catalysed reaction is ATP + [prokaryotic ubiquitin-like protein]-L-glutamate + [protein]-L-lysine = ADP + phosphate + N(6)-([prokaryotic ubiquitin-like protein]-gamma-L-glutamyl)-[protein]-L-lysine.. The protein operates within protein degradation; proteasomal Pup-dependent pathway. Its pathway is protein modification; protein pupylation. Catalyzes the covalent attachment of the prokaryotic ubiquitin-like protein modifier Pup to the proteasomal substrate proteins, thereby targeting them for proteasomal degradation. This tagging system is termed pupylation. The ligation reaction involves the side-chain carboxylate of the C-terminal glutamate of Pup and the side-chain amino group of a substrate lysine. In Nakamurella multipartita (strain ATCC 700099 / DSM 44233 / CIP 104796 / JCM 9543 / NBRC 105858 / Y-104) (Microsphaera multipartita), this protein is Pup--protein ligase.